The chain runs to 205 residues: Holliday junction branch migration complex subunit RuvA (205 aa).

Residues M1 to M64 are domain I. A domain II region spans residues S65 to I143. Residues G144–V153 are flexible linker. The interval V153 to R205 is domain III.

The protein belongs to the RuvA family. Homotetramer. Forms an RuvA(8)-RuvB(12)-Holliday junction (HJ) complex. HJ DNA is sandwiched between 2 RuvA tetramers; dsDNA enters through RuvA and exits via RuvB. An RuvB hexamer assembles on each DNA strand where it exits the tetramer. Each RuvB hexamer is contacted by two RuvA subunits (via domain III) on 2 adjacent RuvB subunits; this complex drives branch migration. In the full resolvosome a probable DNA-RuvA(4)-RuvB(12)-RuvC(2) complex forms which resolves the HJ.

The protein resides in the cytoplasm. Functionally, the RuvA-RuvB-RuvC complex processes Holliday junction (HJ) DNA during genetic recombination and DNA repair, while the RuvA-RuvB complex plays an important role in the rescue of blocked DNA replication forks via replication fork reversal (RFR). RuvA specifically binds to HJ cruciform DNA, conferring on it an open structure. The RuvB hexamer acts as an ATP-dependent pump, pulling dsDNA into and through the RuvAB complex. HJ branch migration allows RuvC to scan DNA until it finds its consensus sequence, where it cleaves and resolves the cruciform DNA. The polypeptide is Holliday junction branch migration complex subunit RuvA (Allorhizobium ampelinum (strain ATCC BAA-846 / DSM 112012 / S4) (Agrobacterium vitis (strain S4))).